Consider the following 227-residue polypeptide: Germin-like protein subfamily 1 member 3 (227 aa).

Positions 1–24 (MKYPFQCFLAKIILLALASSFVSC) are cleaved as a signal peptide. C34 and C50 are oxidised to a cystine. A Cupin type-1 domain is found at 64–212 (SGLNIPGNTN…AFALDINIVR (149 aa)). Mn(2+) contacts are provided by H109, H111, and E116. Residue N136 is glycosylated (N-linked (GlcNAc...) asparagine). Mn(2+) is bound at residue H160.

The protein belongs to the germin family. In terms of assembly, oligomer (believed to be a pentamer but probably hexamer).

It is found in the secreted. The protein localises to the extracellular space. Its subcellular location is the apoplast. Functionally, may play a role in plant defense. Probably has no oxalate oxidase activity even if the active site is conserved. This is Germin-like protein subfamily 1 member 3 from Arabidopsis thaliana (Mouse-ear cress).